Consider the following 275-residue polypeptide: 3-methyl-2-oxobutanoate hydroxymethyltransferase (275 aa).

The Mg(2+) site is built by Asp44 and Asp83. Residues 44–45 (DS), Asp83, and Lys113 contribute to the 3-methyl-2-oxobutanoate site. A Mg(2+)-binding site is contributed by Glu115. The active-site Proton acceptor is Glu182.

It belongs to the PanB family. As to quaternary structure, homodecamer; pentamer of dimers. Mg(2+) serves as cofactor.

It is found in the cytoplasm. It catalyses the reaction 3-methyl-2-oxobutanoate + (6R)-5,10-methylene-5,6,7,8-tetrahydrofolate + H2O = 2-dehydropantoate + (6S)-5,6,7,8-tetrahydrofolate. It participates in cofactor biosynthesis; (R)-pantothenate biosynthesis; (R)-pantoate from 3-methyl-2-oxobutanoate: step 1/2. In terms of biological role, catalyzes the reversible reaction in which hydroxymethyl group from 5,10-methylenetetrahydrofolate is transferred onto alpha-ketoisovalerate to form ketopantoate. This chain is 3-methyl-2-oxobutanoate hydroxymethyltransferase, found in Clostridium novyi (strain NT).